Consider the following 320-residue polypeptide: Ferrochelatase (320 aa).

Residues His-194 and Glu-275 each coordinate Fe cation.

It belongs to the ferrochelatase family. In terms of assembly, monomer.

It localises to the cytoplasm. It catalyses the reaction heme b + 2 H(+) = protoporphyrin IX + Fe(2+). It participates in porphyrin-containing compound metabolism; protoheme biosynthesis; protoheme from protoporphyrin-IX: step 1/1. Catalyzes the ferrous insertion into protoporphyrin IX. This is Ferrochelatase from Escherichia coli O9:H4 (strain HS).